Reading from the N-terminus, the 496-residue chain is Probable uroporphyrinogen-III C-methyltransferase (496 aa).

This sequence belongs to the precorrin methyltransferase family.

The catalysed reaction is uroporphyrinogen III + 2 S-adenosyl-L-methionine = precorrin-2 + 2 S-adenosyl-L-homocysteine + H(+). Siroheme synthase involved in methionine biosynthesis. In Schizosaccharomyces pombe (strain 972 / ATCC 24843) (Fission yeast), this protein is Probable uroporphyrinogen-III C-methyltransferase.